The primary structure comprises 330 residues: MLHPALALVPGEPAGVGPELCVRLVQQPRQDCRLVAFADPATLQAAAAALDLPLRLLPPEALPERPGDLPIQAHCHVHPTRFGHPDPANAPAVIAALCEAASHCVHGVLHGIVTGPVHKAVINQSGIHYTGTTELLAAQAECDVVMMLANPHLRVALVTTHLPLRDVPDAITAALLERCLRIVNTAMCGDFGIATPRIAVLGLNPHAGEEGYLGREELDVVIPVLQRLRAEGMVLLGPLSADTAFLPTKLIGYDAVVAMYHDQGLPVLKHSGFEQAVNITLGLPYPRVAVDHGTALDLAGRGVADPSSLFAATALCARLAASRALLSVRS.

Threonine 133 is a binding site for substrate. Positions 161, 206, and 261 each coordinate a divalent metal cation. Residues lysine 269, asparagine 278, and arginine 287 each coordinate substrate.

This sequence belongs to the PdxA family. As to quaternary structure, homodimer. Zn(2+) serves as cofactor. It depends on Mg(2+) as a cofactor. The cofactor is Co(2+).

Its subcellular location is the cytoplasm. It carries out the reaction 4-(phosphooxy)-L-threonine + NAD(+) = 3-amino-2-oxopropyl phosphate + CO2 + NADH. Its pathway is cofactor biosynthesis; pyridoxine 5'-phosphate biosynthesis; pyridoxine 5'-phosphate from D-erythrose 4-phosphate: step 4/5. Its function is as follows. Catalyzes the NAD(P)-dependent oxidation of 4-(phosphooxy)-L-threonine (HTP) into 2-amino-3-oxo-4-(phosphooxy)butyric acid which spontaneously decarboxylates to form 3-amino-2-oxopropyl phosphate (AHAP). The sequence is that of 4-hydroxythreonine-4-phosphate dehydrogenase from Xylella fastidiosa (strain Temecula1 / ATCC 700964).